Consider the following 527-residue polypeptide: Cytochrome P450 monooxygenase olcJ (527 aa).

Residues 21 to 43 (GLLTRYNVFMAISITVTALYLIH) form a helical membrane-spanning segment. Cysteine 464 serves as a coordination point for heme.

It belongs to the cytochrome P450 family. Requires heme as cofactor.

The protein localises to the membrane. It participates in secondary metabolite biosynthesis; terpenoid biosynthesis. Functionally, cytochrome P450 monooxygenase; part of the gene cluster that mediates the biosynthesis of 15-deoxyoxalicine B. The first step of the pathway is the synthesis of nicotinyl-CoA from nicotinic acid by the nicotinic acid-CoA ligase olcI. Nicotinyl-CoA is then a substrate of polyketide synthase olcA to produce 4-hydroxy-6-(3-pyridinyl)-2H-pyran-2-one (HPPO) which is further prenylated by the polyprenyl transferase olcH to yield geranylgeranyl-HPPO. Geranylgeranyl pyrophosphate is provided by the cluster-specific geranylgeranyl pyrophosphate synthase olcC. The FAD-dependent monooxygenase olcE catalyzes the epoxidation of geranylgeranyl-HPPO and the terpene cyclase olcD catalyzes the cyclization of the terpenoid component, resulting in the formation of the tricyclic terpene moiety seen in predecaturin E. The cytochrome P450 monooxygenase then catalyzes the allylic oxidation of predecaturin E, which is followed by spirocylization with concomitant loss of one molecule of water to form decaturin E. Decaturin E is the substrate of the cytochrome P450 monooxygenase olcJ which hydroxylates it at the C-29 position to form decaturin F. The short-chain dehydrogenase/reductase olcF may catalyze the oxidation of decaturin F to generate the 29-hydroxyl-27-one intermediate, and subsequent hemiacetal formation probably leads to the formation of decaturin C. The dioxygenase olcK may be a peroxisomal enzyme that catalyzes the hydroxylation of decaturin C into decaturin A once decaturin C is shuttled into the peroxisome by the MFS transporter olcL. Finally the cytochrome P450 monooxygenase olcB catalyzes the oxidative rearrangement to yield 15-deoxyoxalicine B. In the absence of olcJ, decaturin E may be shunted to a pathway in which it is oxidized to a ketone, possibly by olcF, to form decaturin D, which undergoes further allylic oxidation to yield decaturin G. Moreover, in the absence of oclK or oclL, oclB can convert decaturin C into 15-deoxyoxalicine A. This is Cytochrome P450 monooxygenase olcJ from Penicillium canescens.